The primary structure comprises 254 residues: 3-deoxy-manno-octulosonate cytidylyltransferase (254 aa).

The protein belongs to the KdsB family.

Its subcellular location is the cytoplasm. It catalyses the reaction 3-deoxy-alpha-D-manno-oct-2-ulosonate + CTP = CMP-3-deoxy-beta-D-manno-octulosonate + diphosphate. It functions in the pathway nucleotide-sugar biosynthesis; CMP-3-deoxy-D-manno-octulosonate biosynthesis; CMP-3-deoxy-D-manno-octulosonate from 3-deoxy-D-manno-octulosonate and CTP: step 1/1. It participates in bacterial outer membrane biogenesis; lipopolysaccharide biosynthesis. Activates KDO (a required 8-carbon sugar) for incorporation into bacterial lipopolysaccharide in Gram-negative bacteria. The sequence is that of 3-deoxy-manno-octulosonate cytidylyltransferase from Geobacter metallireducens (strain ATCC 53774 / DSM 7210 / GS-15).